The chain runs to 107 residues: Ferredoxin (107 aa).

A propeptide spanning residues 1 to 8 (MVSGVSRN) is cleaved from the precursor. Positions 45, 51, and 54 each coordinate [2Fe-2S] cluster.

[2Fe-2S] cluster serves as cofactor.

It is found in the hydrogenosome. Ferredoxins are iron-sulfur proteins that transfer electrons in a wide variety of metabolic reactions. This chain is Ferredoxin, found in Psalteriomonas lanterna (Amoeboflagellate).